A 311-amino-acid polypeptide reads, in one-letter code: Eukaryotic translation initiation factor 3 subunit E (311 aa).

The 181-residue stretch at valine 100–glutamate 280 folds into the PCI domain.

The protein belongs to the eIF-3 subunit E family. As to quaternary structure, component of the eukaryotic translation initiation factor 3 (eIF-3) complex.

The protein resides in the cytoplasm. Its function is as follows. Component of the eukaryotic translation initiation factor 3 (eIF-3) complex, which is involved in protein synthesis of a specialized repertoire of mRNAs and, together with other initiation factors, stimulates binding of mRNA and methionyl-tRNAi to the 40S ribosome. The eIF-3 complex specifically targets and initiates translation of a subset of mRNAs involved in cell proliferation. The chain is Eukaryotic translation initiation factor 3 subunit E from Caenorhabditis briggsae.